The primary structure comprises 304 residues: Small glutamine-rich tetratricopeptide repeat-containing protein beta (304 aa).

TPR repeat units follow at residues 15–49 (LREQ…SPED), 85–118 (ADQL…DPNN), 120–152 (VYYC…DSKY), and 153–186 (SKAY…DPEN). The residue at position 131 (lysine 131) is an N6-acetyllysine. Phosphoserine is present on residues serine 293, serine 295, and serine 297.

Belongs to the SGT family. Homooligomerize. In terms of tissue distribution, expressed specifically in brain.

Functionally, co-chaperone that binds directly to HSC70 and HSP70 and regulates their ATPase activity. This Rattus norvegicus (Rat) protein is Small glutamine-rich tetratricopeptide repeat-containing protein beta (Sgtb).